The chain runs to 292 residues: Sulfhydrogenase 1 subunit gamma (292 aa).

An FAD-binding FR-type domain is found at 15-115; that stretch reads YALHRVKVLK…RGPYGNGFPV (101 aa). Cys-253, Cys-258, Cys-261, and Cys-273 together coordinate [2Fe-2S] cluster.

In terms of assembly, heterotetramer of alpha, beta, gamma and delta subunits. The nickel-containing alpha and delta subunits constitute the hydrogenase activity. The beta and gamma subunits (flavin-containing dimer) constitute the sulfur reductase activity. FAD serves as cofactor. It depends on [2Fe-2S] cluster as a cofactor.

It localises to the cytoplasm. It carries out the reaction n sulfur + H2 = (n-1) sulfur + hydrogen sulfide + H(+). With respect to regulation, stimulated by rubredoxin at pH 7.6 but not ferredoxin. Its function is as follows. Part of a bifunctional enzyme complex that functions as an NADPH-dependent hydrogen-evolving hydrogenase with sulfur reducing activity. May play a role in hydrogen cycling during fermentative growth. Activity not exhibited with NAD. The beta and gamma subunits form the sulfur reducing component that catalyzes the cytoplasmic production of hydrogen sulfide in the presence of elemental sulfur. Not active in the presence of sodium sulfate, sodium sulfite, sodium thiosulfate or cysteine. The chain is Sulfhydrogenase 1 subunit gamma from Pyrococcus furiosus (strain ATCC 43587 / DSM 3638 / JCM 8422 / Vc1).